The primary structure comprises 212 residues: Peptide methionine sulfoxide reductase MsrA (212 aa).

The active site involves Cys-52.

The protein belongs to the MsrA Met sulfoxide reductase family.

The catalysed reaction is L-methionyl-[protein] + [thioredoxin]-disulfide + H2O = L-methionyl-(S)-S-oxide-[protein] + [thioredoxin]-dithiol. It catalyses the reaction [thioredoxin]-disulfide + L-methionine + H2O = L-methionine (S)-S-oxide + [thioredoxin]-dithiol. Has an important function as a repair enzyme for proteins that have been inactivated by oxidation. Catalyzes the reversible oxidation-reduction of methionine sulfoxide in proteins to methionine. This Salmonella paratyphi B (strain ATCC BAA-1250 / SPB7) protein is Peptide methionine sulfoxide reductase MsrA.